Consider the following 161-residue polypeptide: 2-C-methyl-D-erythritol 2,4-cyclodiphosphate synthase (161 aa).

Positions 10 and 12 each coordinate a divalent metal cation. Residues 10-12 and 36-37 each bind 4-CDP-2-C-methyl-D-erythritol 2-phosphate; these read DVH and HS. An a divalent metal cation-binding site is contributed by histidine 44. Residues 58-60, 63-67, 134-137, phenylalanine 141, and arginine 144 contribute to the 4-CDP-2-C-methyl-D-erythritol 2-phosphate site; these read DIG, FPDTD, and TTTE.

Belongs to the IspF family. As to quaternary structure, homotrimer. A divalent metal cation is required as a cofactor.

It catalyses the reaction 4-CDP-2-C-methyl-D-erythritol 2-phosphate = 2-C-methyl-D-erythritol 2,4-cyclic diphosphate + CMP. It functions in the pathway isoprenoid biosynthesis; isopentenyl diphosphate biosynthesis via DXP pathway; isopentenyl diphosphate from 1-deoxy-D-xylulose 5-phosphate: step 4/6. In terms of biological role, involved in the biosynthesis of isopentenyl diphosphate (IPP) and dimethylallyl diphosphate (DMAPP), two major building blocks of isoprenoid compounds. Catalyzes the conversion of 4-diphosphocytidyl-2-C-methyl-D-erythritol 2-phosphate (CDP-ME2P) to 2-C-methyl-D-erythritol 2,4-cyclodiphosphate (ME-CPP) with a corresponding release of cytidine 5-monophosphate (CMP). This Shewanella putrefaciens (strain CN-32 / ATCC BAA-453) protein is 2-C-methyl-D-erythritol 2,4-cyclodiphosphate synthase.